The following is a 570-amino-acid chain: Urease subunit alpha 1 (570 aa).

Positions 131–570 (GGIDTHVHFI…VPMAQRYFLF (440 aa)) constitute a Urease domain. Residues H136, H138, and K219 each contribute to the Ni(2+) site. K219 is modified (N6-carboxylysine). Residue H221 coordinates substrate. Ni(2+) is bound by residues H248 and H274. Catalysis depends on H322, which acts as the Proton donor. D362 is a binding site for Ni(2+).

It belongs to the metallo-dependent hydrolases superfamily. Urease alpha subunit family. In terms of assembly, heterotrimer of UreA (gamma), UreB (beta) and UreC (alpha) subunits. Three heterotrimers associate to form the active enzyme. Ni cation is required as a cofactor. In terms of processing, carboxylation allows a single lysine to coordinate two nickel ions.

Its subcellular location is the cytoplasm. It catalyses the reaction urea + 2 H2O + H(+) = hydrogencarbonate + 2 NH4(+). It participates in nitrogen metabolism; urea degradation; CO(2) and NH(3) from urea (urease route): step 1/1. In terms of biological role, disrupting the ure1 operon causes loss of urease activity, decreased resistance to low pH killing in vitro and decreased pathogen survival when inoculated in BALB/c mice by gavage. The sequence is that of Urease subunit alpha 1 from Brucella suis biovar 1 (strain 1330).